The chain runs to 515 residues: MDEFHRCGKEDSFWQQCFLYPLFFQEDLYAISHDHYLDVSSSSRPMEHLSSNDQLSFLTVKRLIGQIRQQNNSIVLFVNCDPNPLADRKKSFYSESVLEALTLVLEVPFSIWSKYSVEGMNESKSFRSIHSIFPFLEDKFPHSNSILDARIPYYIHPEILVRTFRRWIRDAPSLHPLRSVLYEYRNSPDNLQRSIIVVPRVNTRFFLFLWNYYVCECESILFSRLKRSSHSRSLTHGSLPQRTHFHRKIKHIIIFSRRNSLKSIWSLKDPKIHYVRYGERPIIAIKGAHLLVKKCRYYLLIFRQFYFHLWSEPYRVCSHQLSKNCSSSPGYFLRVRMNPILVRTKMLDELFIADLITDEIDPIVPIVPIIGLLATEKFCDISGRPISKLSWTSLTDDDILDRFDQIWRNLFHYYSGSFDRDGLYRIKYILSLSCAKTLACKHKSTIRVVRKELGPELFKKSFSKEREFYSLRFSSKAAARSQRERIWHSDIPQINPLANSWQKIQDLKIENLFDQ.

Belongs to the intron maturase 2 family. MatK subfamily.

The protein localises to the plastid. It is found in the chloroplast. Usually encoded in the trnK tRNA gene intron. Probably assists in splicing its own and other chloroplast group II introns. This chain is Maturase K, found in Pinus leiophylla (Chihuahua pine).